The chain runs to 369 residues: Protein-glutamate methylesterase/protein-glutamine glutaminase 1 (369 aa).

The Response regulatory domain maps to Arg11–Arg128. Asp62 bears the 4-aspartylphosphate mark. The segment at Ala136–Pro168 is disordered. A CheB-type methylesterase domain is found at Pro170–Glu358. Active-site residues include Ser183, His209, and Asp305.

Belongs to the CheB family. Post-translationally, phosphorylated by CheA. Phosphorylation of the N-terminal regulatory domain activates the methylesterase activity.

The protein localises to the cytoplasm. The enzyme catalyses [protein]-L-glutamate 5-O-methyl ester + H2O = L-glutamyl-[protein] + methanol + H(+). It carries out the reaction L-glutaminyl-[protein] + H2O = L-glutamyl-[protein] + NH4(+). Involved in chemotaxis. Part of a chemotaxis signal transduction system that modulates chemotaxis in response to various stimuli. Catalyzes the demethylation of specific methylglutamate residues introduced into the chemoreceptors (methyl-accepting chemotaxis proteins or MCP) by CheR. Also mediates the irreversible deamidation of specific glutamine residues to glutamic acid. The protein is Protein-glutamate methylesterase/protein-glutamine glutaminase 1 of Cereibacter sphaeroides (strain ATCC 17023 / DSM 158 / JCM 6121 / CCUG 31486 / LMG 2827 / NBRC 12203 / NCIMB 8253 / ATH 2.4.1.) (Rhodobacter sphaeroides).